The primary structure comprises 139 residues: Ribonuclease VapC39 (139 aa).

Residues 4–133 enclose the PINc domain; it reads LLDVNVLIAL…DAALADSASA (130 aa). Mg(2+)-binding residues include Asp-6 and Asp-106.

The protein belongs to the PINc/VapC protein family. Requires Mg(2+) as cofactor.

In terms of biological role, toxic component of a type II toxin-antitoxin (TA) system. An RNase. Its toxic effect is neutralized by coexpression with cognate antitoxin VapB39. This is Ribonuclease VapC39 from Mycobacterium tuberculosis (strain CDC 1551 / Oshkosh).